A 533-amino-acid chain; its full sequence is Tryptophan N-monooxygenase CYP79A68 (533 aa).

Residues 12 to 32 (VTPPISLSLAFIIFMFLVKFI) form a helical membrane-spanning segment. An N-linked (GlcNAc...) asparagine glycan is attached at Asn209. Cys471 lines the heme pocket.

It belongs to the cytochrome P450 family. Requires heme as cofactor. As to expression, confined to buds.

The protein resides in the membrane. It catalyses the reaction L-tryptophan + 2 reduced [NADPH--hemoprotein reductase] + 2 O2 = (E)-(indol-3-yl)acetaldehyde oxime + 2 oxidized [NADPH--hemoprotein reductase] + CO2 + 3 H2O + 2 H(+). Catalyzes with low efficiency E and Z isomers of indole-3-acetaldoxime from tryptophan (Trp). This is Tryptophan N-monooxygenase CYP79A68 from Prunus mume (Japanese apricot).